The following is a 420-amino-acid chain: Phosphoribosylamine--glycine ligase (420 aa).

One can recognise an ATP-grasp domain in the interval 108–314; sequence KQFMEKYAIP…FAALIDALLH (207 aa). 134-195 provides a ligand contact to ATP; sequence LDERGVPIVI…EDFLAGEEFS (62 aa). The Mg(2+) site is built by Glu284 and Asn286.

This sequence belongs to the GARS family. Mg(2+) is required as a cofactor. It depends on Mn(2+) as a cofactor.

The catalysed reaction is 5-phospho-beta-D-ribosylamine + glycine + ATP = N(1)-(5-phospho-beta-D-ribosyl)glycinamide + ADP + phosphate + H(+). It functions in the pathway purine metabolism; IMP biosynthesis via de novo pathway; N(1)-(5-phospho-D-ribosyl)glycinamide from 5-phospho-alpha-D-ribose 1-diphosphate: step 2/2. The chain is Phosphoribosylamine--glycine ligase from Listeria monocytogenes serotype 4b (strain F2365).